The primary structure comprises 151 residues: uncharacterized protein (151 aa).

A run of 4 helical transmembrane segments spans residues 22–42, 62–82, 97–117, and 121–141; these read IVSI…GFFF, ALFI…TKII, LFAF…ADYF, and IYIP…IELA.

Its subcellular location is the cell membrane. This is an uncharacterized protein from Bacillus subtilis (strain 168).